A 397-amino-acid chain; its full sequence is Elongation factor Tu (397 aa).

A tr-type G domain is found at 10 to 206 (KPHVNIGTIG…AVDSYIPTPE (197 aa)). Residues 19 to 26 (GHVDHGKT) are G1. Residue 19-26 (GHVDHGKT) coordinates GTP. Thr26 provides a ligand contact to Mg(2+). Positions 60–64 (GITIN) are G2. The interval 81-84 (DCPG) is G3. Residues 81-85 (DCPGH) and 136-139 (NKAD) contribute to the GTP site. Residues 136 to 139 (NKAD) are G4. The interval 174–176 (SAL) is G5.

It belongs to the TRAFAC class translation factor GTPase superfamily. Classic translation factor GTPase family. EF-Tu/EF-1A subfamily. As to quaternary structure, monomer.

The protein localises to the cytoplasm. It catalyses the reaction GTP + H2O = GDP + phosphate + H(+). Functionally, GTP hydrolase that promotes the GTP-dependent binding of aminoacyl-tRNA to the A-site of ribosomes during protein biosynthesis. The protein is Elongation factor Tu of Clostridium beijerinckii (strain ATCC 51743 / NCIMB 8052) (Clostridium acetobutylicum).